A 500-amino-acid polypeptide reads, in one-letter code: Lysine--tRNA ligase (500 aa).

2 residues coordinate Mg(2+): E410 and E417.

This sequence belongs to the class-II aminoacyl-tRNA synthetase family. Homodimer. The cofactor is Mg(2+).

Its subcellular location is the cytoplasm. It catalyses the reaction tRNA(Lys) + L-lysine + ATP = L-lysyl-tRNA(Lys) + AMP + diphosphate. This chain is Lysine--tRNA ligase, found in Mycoplasma mycoides subsp. mycoides SC (strain CCUG 32753 / NCTC 10114 / PG1).